A 179-amino-acid polypeptide reads, in one-letter code: Large ribosomal subunit protein uL5 (179 aa).

This sequence belongs to the universal ribosomal protein uL5 family. As to quaternary structure, part of the 50S ribosomal subunit; part of the 5S rRNA/L5/L18/L25 subcomplex. Contacts the 5S rRNA and the P site tRNA. Forms a bridge to the 30S subunit in the 70S ribosome.

This is one of the proteins that bind and probably mediate the attachment of the 5S RNA into the large ribosomal subunit, where it forms part of the central protuberance. In the 70S ribosome it contacts protein S13 of the 30S subunit (bridge B1b), connecting the 2 subunits; this bridge is implicated in subunit movement. Contacts the P site tRNA; the 5S rRNA and some of its associated proteins might help stabilize positioning of ribosome-bound tRNAs. The sequence is that of Large ribosomal subunit protein uL5 from Lawsonia intracellularis (strain PHE/MN1-00).